The sequence spans 1237 residues: Glutamate receptor ionotropic, NMDA 2C (1237 aa).

An N-terminal signal peptide occupies residues 1–19; it reads MGGALGPALLLTSLLGAWA. Residues 20-554 lie on the Extracellular side of the membrane; the sequence is RLGAGQGEQA…SAFLEPYSPA (535 aa). Residues Asn70 and Asn73 are each glycosylated (N-linked (GlcNAc...) asparagine). An intrachain disulfide couples Cys82 to Cys317. Residues Asn337 and Asn438 are each glycosylated (N-linked (GlcNAc...) asparagine). 2 cysteine pairs are disulfide-bonded: Cys426–Cys453 and Cys433–Cys454. Residues Ser509, Thr511, and Arg516 each contribute to the L-glutamate site. N-linked (GlcNAc...) asparagine glycosylation occurs at Asn539. Residues 555–575 traverse the membrane as a helical segment; that stretch reads VWVMMFVMCLTVVAITVFMFE. At 576 to 601 the chain is on the cytoplasmic side; sequence YFSPVSYNQNLTKGKKPGGPSFTIGK. Residues 601 to 620 form a pore-forming region; that stretch reads KSVWLLWALVFNNSVPIENP. An intramembrane region (discontinuously helical) is located at residues 602-611; it reads SVWLLWALVF. The Cytoplasmic portion of the chain corresponds to 612–622; sequence NNSVPIENPRG. A helical transmembrane segment spans residues 623-644; it reads TTSKIMVLVWAFFAVIFLASYT. Topologically, residues 645-813 are extracellular; sequence ANLAAFMIQE…EVMSSKLDID (169 aa). N-linked (GlcNAc...) asparagine glycosylation occurs at Asn685. Ser687, Thr688, and Asp729 together coordinate L-glutamate. A disulfide bridge links Cys743 with Cys798. Residues 814–833 traverse the membrane as a helical segment; that stretch reads NMAGVFYMLLVAMGLALLVF. At 834-1237 the chain is on the cytoplasmic side; that stretch reads AWEHLVYWKL…RRVSSLESEV (404 aa). 3 positions are modified to phosphoserine: Ser875, Ser881, and Ser912. A compositionally biased stretch (polar residues) spans 907 to 925; that stretch reads ADVSSSLDRATRTIENWGN. A disordered region spans residues 907–990; it reads ADVSSSLDRA…LPDVSRPSCR (84 aa). Residues 930 to 941 are compositionally biased toward low complexity; it reads PAPTASGPRSST. Residues 968-982 show a composition bias toward pro residues; it reads PQPPARPATCGPPLP. Positions 1235–1237 match the PDZ-binding motif; that stretch reads SEV.

Belongs to the glutamate-gated ion channel (TC 1.A.10.1) family. NR2C/GRIN2C subfamily. Heterotetramer. Forms heterotetrameric channels composed of two GluN1/zeta subunits (GRIN1), and two identical GluN2/epsilon subunits (GRIN2A, GRIN2B, GRIN2C or GRIN2D) or GluN3 subunits (GRIN3A or GRIN3B) (in vitro). In vivo, the subunit composition may depend on the expression levels of the different subunits. Interacts with PDZ domains of PATJ and DLG4. Interacts (via PDZ-binding motif) with SNX27 (via PDZ domain); the interaction is required for recycling to the plasma membrane when endocytosed and prevent degradation in lysosomes. In terms of tissue distribution, detected in cerebellum.

The protein localises to the cell membrane. The protein resides in the postsynaptic cell membrane. The catalysed reaction is Ca(2+)(in) = Ca(2+)(out). It catalyses the reaction Na(+)(in) = Na(+)(out). It carries out the reaction K(+)(in) = K(+)(out). Functionally, component of N-methyl-D-aspartate (NMDA) receptors (NMDARs) that function as heterotetrameric, ligand-gated cation channels with high calcium permeability and voltage-dependent block by Mg(2+). Participates in synaptic plasticity for learning and memory formation by contributing to the slow phase of excitatory postsynaptic current and long-term synaptic potentiation. Channel activation requires binding of the neurotransmitter L-glutamate to the GluN2 subunit, glycine or D-serine binding to the GluN1 subunit, plus membrane depolarization to eliminate channel inhibition by Mg(2+). NMDARs mediate simultaneously the potasium efflux and the influx of calcium and sodium. Each GluN2 subunit confers differential attributes to channel properties, including activation, deactivation and desensitization kinetics, pH sensitivity, Ca2(+) permeability, and binding to allosteric modulators. This chain is Glutamate receptor ionotropic, NMDA 2C, found in Rattus norvegicus (Rat).